A 56-amino-acid polypeptide reads, in one-letter code: MAKRGSTLLVKLASSAGTGYFYVKKRNPKKLINKLSFRKYDPVARKHVLFTEEKLR.

Belongs to the bacterial ribosomal protein bL33 family.

The sequence is that of Large ribosomal subunit protein bL33 from Ehrlichia ruminantium (strain Gardel).